The chain runs to 58 residues: Cecropin-A (58 aa).

An N-terminal signal peptide occupies residues 1-23; the sequence is MNFSKIFIFVVLAVLLLCSQTEA. Leucine 57 is modified (leucine amide).

This sequence belongs to the cecropin family. In terms of tissue distribution, relatively abundant in head, thorax and to a lesser extent in abdominal carcass and anterior midgut.

The protein resides in the secreted. In terms of biological role, antibacterial activity against several Gram-positive and Gram-negative bacteria. Antifungal activity against A.fumigatus, B.cinerea, F.culmorum, F.oxysporum, N.crassa, C.albicans, C.neoformans and S.cerevisiae. The chain is Cecropin-A (CecA) from Anopheles gambiae (African malaria mosquito).